Reading from the N-terminus, the 156-residue chain is Snaclec A11 (156 aa).

The N-terminal stretch at 1–23 (MGRSISVSFGLLVVFLSLSGTGA) is a signal peptide. Cystine bridges form between Cys27-Cys38, Cys55-Cys154, and Cys129-Cys146. Residues 34–155 (YDQHCYQAVD…CGQPYRFTCE (122 aa)) form the C-type lectin domain.

It belongs to the snaclec family. Heterodimer; disulfide-linked. As to expression, expressed by the venom gland.

The protein resides in the secreted. Functionally, interferes with one step of hemostasis (modulation of platelet aggregation, or coagulation cascade, for example). This chain is Snaclec A11, found in Macrovipera lebetinus (Levantine viper).